Here is a 466-residue protein sequence, read N- to C-terminus: UDP-N-acetylmuramoylalanine--D-glutamate ligase (466 aa).

Residue 139–145 (GTAGKGG) participates in ATP binding.

The protein belongs to the MurCDEF family.

The protein resides in the cytoplasm. The catalysed reaction is UDP-N-acetyl-alpha-D-muramoyl-L-alanine + D-glutamate + ATP = UDP-N-acetyl-alpha-D-muramoyl-L-alanyl-D-glutamate + ADP + phosphate + H(+). Its pathway is cell wall biogenesis; peptidoglycan biosynthesis. Functionally, cell wall formation. Catalyzes the addition of glutamate to the nucleotide precursor UDP-N-acetylmuramoyl-L-alanine (UMA). The chain is UDP-N-acetylmuramoylalanine--D-glutamate ligase from Deinococcus geothermalis (strain DSM 11300 / CIP 105573 / AG-3a).